The following is a 134-amino-acid chain: Phosphoribosyl-ATP pyrophosphatase 2 (134 aa).

This sequence belongs to the PRA-PH family.

The protein localises to the cytoplasm. It catalyses the reaction 1-(5-phospho-beta-D-ribosyl)-ATP + H2O = 1-(5-phospho-beta-D-ribosyl)-5'-AMP + diphosphate + H(+). Its pathway is amino-acid biosynthesis; L-histidine biosynthesis; L-histidine from 5-phospho-alpha-D-ribose 1-diphosphate: step 2/9. The protein is Phosphoribosyl-ATP pyrophosphatase 2 (hisE2) of Bradyrhizobium diazoefficiens (strain JCM 10833 / BCRC 13528 / IAM 13628 / NBRC 14792 / USDA 110).